The following is a 450-amino-acid chain: Serine incorporator 2 (450 aa).

The next 11 helical transmembrane spans lie at 5 to 27 (LGACSLLSCASCLCGSAPCILCG), 40 to 57 (LLFTSFLFLGVLVSIIML), 96 to 118 (AVYRMCFATAAFFFFFMLLMICV), 131 to 150 (GFWFFKFLILVGITVGAFYI), 160 to 182 (FYFGVVGSFLFILIQLILFVDFA), 203 to 225 (AGLFFFTFLFYLLSIAAVALMFV), 238 to 257 (VFISLNLTFCVCVSIIAVLP), 264 to 286 (PNSGLLQASVITLYTMFVTWSAL), 315 to 337 (VWWDAPSIVGLVIFILCTFFISL), 380 to 402 (TYSYSFFHFCLVLASLHVMMTLT), and 417 to 439 (WTSVWVKICASWAGLFLYLWTLV).

The protein belongs to the TDE1 family.

Its subcellular location is the cell membrane. The enzyme catalyses a 1,2-diacyl-sn-glycero-3-phospho-L-serine(in) = a 1,2-diacyl-sn-glycero-3-phospho-L-serine(out). It catalyses the reaction a 1,2-diacyl-sn-glycero-3-phosphocholine(in) = a 1,2-diacyl-sn-glycero-3-phosphocholine(out). The catalysed reaction is a 1,2-diacyl-sn-glycero-3-phosphoethanolamine(in) = a 1,2-diacyl-sn-glycero-3-phosphoethanolamine(out). Non-ATP-dependent, non-specific lipid transporter for phosphatidylserine, phosphatidylcholine, and phosphatidylethanolamine. Functions as a scramblase that flips lipids in both directions across the membrane. In contrast to SERINC3 and SERINC5, has no effect on gammaretrovirus particles infectivity. This chain is Serine incorporator 2 (Serinc2), found in Mus musculus (Mouse).